The sequence spans 155 residues: Endoribonuclease YbeY (155 aa).

3 residues coordinate Zn(2+): His-116, His-120, and His-126.

The protein belongs to the endoribonuclease YbeY family. Requires Zn(2+) as cofactor.

Its subcellular location is the cytoplasm. In terms of biological role, single strand-specific metallo-endoribonuclease involved in late-stage 70S ribosome quality control and in maturation of the 3' terminus of the 16S rRNA. The protein is Endoribonuclease YbeY of Colwellia psychrerythraea (strain 34H / ATCC BAA-681) (Vibrio psychroerythus).